A 476-amino-acid polypeptide reads, in one-letter code: Angiotensinogen (476 aa).

The N-terminal stretch at 1 to 24 (MAPAGLSLGAAILCLLAWAGLAAG) is a signal peptide. Cys-42 and Cys-161 are oxidised to a cystine. 4 N-linked (GlcNAc...) asparagine glycosylation sites follow: Asn-295, Asn-319, Asn-362, and Asn-401.

It belongs to the serpin family. In terms of processing, in response to low blood pressure, the enzyme renin/REN cleaves angiotensinogen to produce angiotensin-1. Angiotensin-1 is a substrate of ACE (angiotensin converting enzyme) that removes a dipeptide to yield the physiologically active peptide angiotensin-2. Angiotensin-1 and angiotensin-2 can be further processed to generate angiotensin-3, angiotensin-4. Angiotensin 1-9 is cleaved from angiotensin-1 by ACE2 and can be further processed by ACE to produce angiotensin 1-7, angiotensin 1-5 and angiotensin 1-4. Angiotensin 1-7 has also been proposed to be cleaved from angiotensin-2 by ACE2 or from angiotensin-1 by MME (neprilysin). The disulfide bond is labile. Angiotensinogen is present in the circulation in a near 40:60 ratio with the oxidized disulfide-bonded form, which preferentially interacts with receptor-bound renin.

The protein resides in the secreted. Functionally, essential component of the renin-angiotensin system (RAS), a potent regulator of blood pressure, body fluid and electrolyte homeostasis. Acts directly on vascular smooth muscle as a potent vasoconstrictor, affects cardiac contractility and heart rate through its action on the sympathetic nervous system, and alters renal sodium and water absorption through its ability to stimulate the zona glomerulosa cells of the adrenal cortex to synthesize and secrete aldosterone. Acts by binding to angiotensin receptors AGTR1 and AGTR2. Also binds the DEAR/FBXW7-AS1 receptor. In terms of biological role, stimulates aldosterone release. Its function is as follows. Is a ligand for the G-protein coupled receptor MAS1. Has vasodilator and antidiuretic effects. Has an antithrombotic effect that involves MAS1-mediated release of nitric oxide from platelets. The chain is Angiotensinogen (AGT) from Bos taurus (Bovine).